We begin with the raw amino-acid sequence, 127 residues long: Aspartate 1-decarboxylase (127 aa).

Ser-25 functions as the Schiff-base intermediate with substrate; via pyruvic acid in the catalytic mechanism. Residue Ser-25 is modified to Pyruvic acid (Ser). Thr-57 serves as a coordination point for substrate. Tyr-58 acts as the Proton donor in catalysis. Position 73–75 (73–75) interacts with substrate; sequence GSA.

The protein belongs to the PanD family. Heterooctamer of four alpha and four beta subunits. The cofactor is pyruvate. In terms of processing, is synthesized initially as an inactive proenzyme, which is activated by self-cleavage at a specific serine bond to produce a beta-subunit with a hydroxyl group at its C-terminus and an alpha-subunit with a pyruvoyl group at its N-terminus.

The protein resides in the cytoplasm. The catalysed reaction is L-aspartate + H(+) = beta-alanine + CO2. Its pathway is cofactor biosynthesis; (R)-pantothenate biosynthesis; beta-alanine from L-aspartate: step 1/1. Functionally, catalyzes the pyruvoyl-dependent decarboxylation of aspartate to produce beta-alanine. The chain is Aspartate 1-decarboxylase from Laribacter hongkongensis (strain HLHK9).